The sequence spans 181 residues: Large ribosomal subunit protein uL5 (181 aa).

It belongs to the universal ribosomal protein uL5 family. In terms of assembly, part of the 50S ribosomal subunit; part of the 5S rRNA/L5/L18/L25 subcomplex. Contacts the 5S rRNA and the P site tRNA. Forms a bridge to the 30S subunit in the 70S ribosome.

In terms of biological role, this is one of the proteins that bind and probably mediate the attachment of the 5S RNA into the large ribosomal subunit, where it forms part of the central protuberance. In the 70S ribosome it contacts protein S13 of the 30S subunit (bridge B1b), connecting the 2 subunits; this bridge is implicated in subunit movement. Contacts the P site tRNA; the 5S rRNA and some of its associated proteins might help stabilize positioning of ribosome-bound tRNAs. The polypeptide is Large ribosomal subunit protein uL5 (Helicobacter hepaticus (strain ATCC 51449 / 3B1)).